The sequence spans 279 residues: Genome polyprotein (279 aa).

Belongs to the potyviridae genome polyprotein family. Post-translationally, genome polyprotein of potyviruses undergoes post-translational proteolytic processing by the main proteinase NIa-pro resulting in the production of at least ten individual proteins. The P1 proteinase and the HC-pro cleave only their respective C-termini autocatalytically. 6K1 is essential for proper proteolytic separation of P3 from CI.

The protein localises to the virion. It catalyses the reaction RNA(n) + a ribonucleoside 5'-triphosphate = RNA(n+1) + diphosphate. In terms of biological role, an RNA-dependent RNA polymerase that plays an essential role in the virus replication. Its function is as follows. Involved in aphid transmission, cell-to-cell and systemis movement, encapsidation of the viral RNA and in the regulation of viral RNA amplification. The polypeptide is Genome polyprotein (Solanum betaceum (Tamarillo)).